The primary structure comprises 1020 residues: Neurofilament heavy polypeptide (1020 aa).

The head stretch occupies residues 1 to 100 (MMSFGGADAL…VATSRSEKEQ (100 aa)). The interval 58–83 (VSASPSRFRGAGAASSTDSLDTLSNG) is disordered. The span at 71–82 (ASSTDSLDTLSN) shows a compositional bias: polar residues. A phosphoserine mark is found at Ser76 and Ser124. The 317-residue stretch at 97 to 413 (EKEQLQALND…KLLEGEECRI (317 aa)) folds into the IF rod domain. A coil 1A region spans residues 101-132 (LQALNDRFAGYIDKVRQLEAHNRSLEGEAAAL). Residues 133 to 145 (RQQQAGRSAMGEL) form a linker 1 region. The tract at residues 146–244 (YEREVREMRG…QEEVGELLGQ (99 aa)) is coil 1B. The segment at 245–266 (IQGSGAAQAQMQAETRDALKCD) is linker 12. The tract at residues 267–288 (VTSALREIRAQLEGHAVQSTLQ) is coil 2A. Residues 289-292 (SEEW) are linker 2. Residues 293 to 413 (FRVRLDRLSE…KLLEGEECRI (121 aa)) form a coil 2B region. Ser347 and Ser421 each carry phosphoserine. Residues 414–1020 (GFGPIPFSLP…ATEDKAAKGK (607 aa)) form a tail region. Residues 456–1020 (IVEEQTEETQ…ATEDKAAKGK (565 aa)) are disordered. Composition is skewed to acidic residues over residues 459-475 (EQTE…EEEE) and 483-498 (GKEE…EGGE). Phosphoserine is present on residues Ser511, Ser526, Ser532, Ser540, Ser546, Ser552, Ser560, Ser566, Ser574, Ser580, Ser586, Ser594, Ser600, Ser606, Ser614, Ser620, Ser628, Ser634, Ser640, Ser648, Ser654, Ser662, Ser668, Ser676, Ser682, Ser690, Ser696, and Ser704. Positions 511 to 1020 (SPEKEAKSPV…ATEDKAAKGK (510 aa)) are enriched in basic and acidic residues. Repeat copies occupy residues 525–530 (KSPAEA), 531–536 (KSPEKE), 539–544 (KSPAEV), and 545–550 (KSPEKA). The 30 X 6 AA repeats of K-S-P-[AEPV]-[EAK]-[AEVK] stretch occupies residues 525–826 (KSPAEAKSPE…KEEVKSPVKE (302 aa)). Repeat unit 5 spans residues 559 to 564 (KSPPEA). 2 tandem repeats follow at residues 573–578 (KSPAEV) and 579–584 (KSPEKA). 2 repeat units span residues 593 to 598 (KSPAEA) and 599 to 604 (KSPEKA). Repeat unit 10 spans residues 613–618 (KSPAEA). A run of 4 repeats spans residues 627 to 632 (KSPAEV), 633 to 638 (KSPEKA), 639 to 644 (KSPTKE), and 647 to 652 (KSPEKA). A run of 12 repeats spans residues 661–666 (KSPEKA), 667–672 (KSPVKA), 675–680 (KSPEKA), 681–686 (KSPVKA), 689–694 (KSPEKA), 695–700 (KSPVKE), 703–708 (KSPEKA), 709–714 (KSPVKE), 717–722 (KSPEKA), 723–728 (KSPVKE), 737–742 (KSPVKE), and 745–750 (KSPEKA). A phosphoserine mark is found at Ser718, Ser724, and Ser738. Phosphoserine occurs at positions 752 and 763. The stretch at 762–767 (KSPEAK) is repeat 27. Thr768 is modified (phosphothreonine). Repeat copies occupy residues 786–791 (KSPVKE), 794–799 (KSPEKA), and 821–826 (KSPVKE). 4 positions are modified to phosphoserine: Ser787, Ser795, Ser822, and Ser888.

It belongs to the intermediate filament family. In terms of assembly, forms heterodimers with NEFL; which can further hetero-oligomerize (in vitro). Forms heterodimers with INA (in vitro). Post-translationally, there are a number of repeats of the tripeptide K-S-P, NFH is phosphorylated on a number of the serines in this motif. It is thought that phosphorylation of NFH results in the formation of interfilament cross bridges that are important in the maintenance of axonal caliber. Phosphorylation seems to play a major role in the functioning of the larger neurofilament polypeptides (NF-M and NF-H), the levels of phosphorylation being altered developmentally and coincidentally with a change in the neurofilament function. In terms of processing, phosphorylated in the head and rod regions by the PKC kinase PKN1, leading to the inhibition of polymerization.

The protein localises to the cytoplasm. Its subcellular location is the cytoskeleton. The protein resides in the cell projection. It is found in the axon. In terms of biological role, neurofilaments usually contain three intermediate filament proteins: NEFL, NEFM, and NEFH which are involved in the maintenance of neuronal caliber. NEFH has an important function in mature axons that is not subserved by the two smaller NF proteins. May additionally cooperate with the neuronal intermediate filament proteins PRPH and INA to form neuronal filamentous networks. In Homo sapiens (Human), this protein is Neurofilament heavy polypeptide (NEFH).